The following is a 38-amino-acid chain: Non-specific lipid-transfer protein P2 (38 aa).

The protein belongs to the plant LTP family.

The protein localises to the secreted. Plant non-specific lipid-transfer proteins transfer phospholipids as well as galactolipids across membranes. May play a role in wax or cutin deposition in the cell walls of expanding epidermal cells and certain secretory tissues. The polypeptide is Non-specific lipid-transfer protein P2 (Vitis sp. (Grape)).